A 73-amino-acid chain; its full sequence is U3-agatoxin-Ao1e (73 aa).

An N-terminal signal peptide occupies residues methionine 1 to alanine 20. Residues isoleucine 21–arginine 34 constitute a propeptide that is removed on maturation. 4 disulfides stabilise this stretch: cysteine 36–cysteine 52, cysteine 43–cysteine 57, cysteine 51–cysteine 67, and cysteine 59–cysteine 65. Asparagine amide is present on asparagine 71.

Belongs to the neurotoxin 07 (Beta/delta-agtx) family. 03 (aga-4) subfamily. Aga sub-subfamily. As to expression, expressed by the venom gland.

Its subcellular location is the secreted. Insecticidal neurotoxin that induces an irreversible spastic paralysis when injected into insects. Modifies presynaptic voltage-gated sodium channels (Nav), causing them to open at the normal resting potential of the nerve. This leads to spontaneous release of neurotransmitter and repetitive action potentials in motor neurons. This Agelena orientalis (Funnel-web spider) protein is U3-agatoxin-Ao1e.